The chain runs to 431 residues: STE20-related kinase adapter protein alpha (431 aa).

A phosphoserine mark is found at Ser-2 and Ser-46. 2 disordered regions span residues 32 to 52 (EQPP…SIAS) and 314 to 344 (PSRS…SHPY). A Protein kinase domain is found at 69-379 (YELLTIIGKG…ASTLLNHSFF (311 aa)). Phosphothreonine; by LKB1 is present on Thr-419.

The protein belongs to the protein kinase superfamily. STE Ser/Thr protein kinase family. STE20 subfamily. Component of a trimeric complex composed of STK11/LKB1, STRAD (STRADA or STRADB) and CAB39/MO25 (CAB39/MO25alpha or CAB39L/MO25beta): the complex tethers STK11/LKB1 in the cytoplasm and stimulates its catalytic activity.

The protein resides in the nucleus. The protein localises to the cytoplasm. In terms of biological role, pseudokinase which, in complex with CAB39/MO25 (CAB39/MO25alpha or CAB39L/MO25beta), binds to and activates STK11/LKB1. Adopts a closed conformation typical of active protein kinases and binds STK11/LKB1 as a pseudosubstrate, promoting conformational change of STK11/LKB1 in an active conformation. In Mus musculus (Mouse), this protein is STE20-related kinase adapter protein alpha (Strada).